Reading from the N-terminus, the 380-residue chain is Reducing-end xylose-releasing exo-oligoxylanase Rex8A (380 aa).

The Proton donor role is filled by E70. The active-site Proton acceptor is D265.

The protein belongs to the glycosyl hydrolase 8 (cellulase D) family.

It carries out the reaction Hydrolysis of (1-&gt;4)-beta-D-xylose residues from the reducing end of oligosaccharides.. The protein operates within glycan degradation; xylan degradation. Functionally, involved in depolymerization of xylan, a major component of the lignocellulosic substrates. Acts as an exo-oligoxylanase that efficiently hydrolyzes xylooligosaccharides, releasing xylose from their reducing ends. Hydrolyzes xylooligomers of 3 to 6 xylose units to xylose and xylobiose. Besides linear xylooligosaccharides, also hydrolyzes branched xylooligomers, such as xylooligomers decorated with 4-O-methyl-D-glucuronic acid moieties. Its proposed role is the degradation of xylooligomers produced by the activity of extracellular xylanases once they have been transported inside cells. Shows minor activity on polymeric xylan (glucuronoxylan from beechwood). Is not active on cellooligosaccharides or cellulosic substrates, or on other polysaccharides such as pectin, polygalacturonic acid, laminarin, or lichenan. The chain is Reducing-end xylose-releasing exo-oligoxylanase Rex8A from Paenibacillus barcinonensis.